We begin with the raw amino-acid sequence, 186 residues long: Adenylate kinase (186 aa).

Residue 11 to 16 (GAGKGT) coordinates ATP. The segment at 31-60 (STGDILRAAVKNGTAMGIEAKKYMDAGDLV) is NMP. Residues Thr32, Arg37, 58-60 (DLV), 86-89 (GFPR), and Gln93 each bind AMP. Residues 127–137 (GRAIKEGRSDD) are LID. ATP is bound at residue Arg128. AMP contacts are provided by Arg134 and Arg145. ATP is bound at residue Gly173.

This sequence belongs to the adenylate kinase family. As to quaternary structure, monomer.

The protein localises to the cytoplasm. The enzyme catalyses AMP + ATP = 2 ADP. It functions in the pathway purine metabolism; AMP biosynthesis via salvage pathway; AMP from ADP: step 1/1. Catalyzes the reversible transfer of the terminal phosphate group between ATP and AMP. Plays an important role in cellular energy homeostasis and in adenine nucleotide metabolism. This chain is Adenylate kinase, found in Leptospira biflexa serovar Patoc (strain Patoc 1 / Ames).